A 187-amino-acid chain; its full sequence is Decorin-binding protein B (187 aa).

The signal sequence occupies residues 1-20; the sequence is MKIGKLNSIVIALFFKLLVA.

It belongs to the decorin-binding protein family.

In terms of biological role, binds to decorin which may mediate the adherence of B.burgdorferi to collagen fibers in skin and other tissues. This is Decorin-binding protein B (dbpB) from Borreliella burgdorferi (strain ATCC 35210 / DSM 4680 / CIP 102532 / B31) (Borrelia burgdorferi).